The chain runs to 267 residues: Malonyl-[acyl-carrier protein] O-methyltransferase (267 aa).

Belongs to the methyltransferase superfamily.

It catalyses the reaction malonyl-[ACP] + S-adenosyl-L-methionine = malonyl-[ACP] methyl ester + S-adenosyl-L-homocysteine. It participates in cofactor biosynthesis; biotin biosynthesis. In terms of biological role, converts the free carboxyl group of a malonyl-thioester to its methyl ester by transfer of a methyl group from S-adenosyl-L-methionine (SAM). It allows to synthesize pimeloyl-ACP via the fatty acid synthetic pathway. The chain is Malonyl-[acyl-carrier protein] O-methyltransferase from Geobacter sulfurreducens (strain ATCC 51573 / DSM 12127 / PCA).